Consider the following 201-residue polypeptide: Cerebellin-4 (201 aa).

The first 27 residues, 1 to 27 (MGSGRRALSAVPAVLLVLTLPGLPVWA), serve as a signal peptide directing secretion. Residues N29 and N88 are each glycosylated (N-linked (GlcNAc...) asparagine). A C1q domain is found at 66–201 (AANSKVAFSA…TFSGFLVFPL (136 aa)).

As to quaternary structure, homohexamer; disulfide-linked homotrimers. The trimers are assembled via the globular C1q domains. The trimers associate via N-terminal cysteine residues to form disulfide-linked hexamers. May form oligomers with CBLN1, CBLN2 and CBLN3 prior to secretion. Strongly interacts with DCC in a NTN1-displaceable fashion. Weakly binds to NRXN1 and NRXN2 long and short isoforms produced by alternative promoter usage. Interaction with NRXN3 short isoform is hardly detectable; no interaction at all with NRXN3 long isoform. In terms of processing, sialoglycoprotein.

The protein resides in the secreted. It is found in the synapse. Its function is as follows. Acts as a synaptic organizer in specific subsets of neurons in the brain. Essential for the formation and maintenance of inhibitory GABAergic synapses. Promotes the development of dendrite-targeting inhibitory GABAergic synapses made by somatostatin-positive interneurons. May contribute to the function of ventral medial habenula region of the brain implicated in the regulation of anxiety-related behaviors. May play a role in CBLN3 export from the endoplasmic reticulum and secretion. The polypeptide is Cerebellin-4 (CBLN4) (Homo sapiens (Human)).